A 471-amino-acid chain; its full sequence is Putative pentatricopeptide repeat-containing protein At1g53330 (471 aa).

PPR repeat units follow at residues 46–81, 82–116, 117–147, 151–185, 186–221, 222–256, 257–291, 292–326, 327–361, and 362–396; these read SLLC…RIVP, TEII…RCQR, TVKS…IDEF, DACT…KVKP, TGVT…GVRP, TVHI…KIKV, DAAI…GCKP, DTVT…GLKP, DVIS…GCSP, and DTLS…GYKP.

The protein belongs to the PPR family. P subfamily.

In terms of biological role, involved during embryo development. The sequence is that of Putative pentatricopeptide repeat-containing protein At1g53330 from Arabidopsis thaliana (Mouse-ear cress).